The sequence spans 86 residues: Cell division topological specificity factor (86 aa).

It belongs to the MinE family.

Functionally, prevents the cell division inhibition by proteins MinC and MinD at internal division sites while permitting inhibition at polar sites. This ensures cell division at the proper site by restricting the formation of a division septum at the midpoint of the long axis of the cell. The chain is Cell division topological specificity factor from Rhizobium etli (strain ATCC 51251 / DSM 11541 / JCM 21823 / NBRC 15573 / CFN 42).